Reading from the N-terminus, the 362-residue chain is Phosphate acyltransferase (362 aa).

The tract at residues 343-362 (TKKISTSTINPKTSETTKES) is disordered. Over residues 344-356 (KKISTSTINPKTS) the composition is skewed to polar residues.

It belongs to the PlsX family. Homodimer. Probably interacts with PlsY.

The protein resides in the cytoplasm. It catalyses the reaction a fatty acyl-[ACP] + phosphate = an acyl phosphate + holo-[ACP]. The protein operates within lipid metabolism; phospholipid metabolism. Functionally, catalyzes the reversible formation of acyl-phosphate (acyl-PO(4)) from acyl-[acyl-carrier-protein] (acyl-ACP). This enzyme utilizes acyl-ACP as fatty acyl donor, but not acyl-CoA. The polypeptide is Phosphate acyltransferase (Aster yellows witches'-broom phytoplasma (strain AYWB)).